We begin with the raw amino-acid sequence, 185 residues long: AP-3 complex subunit sigma (185 aa).

The protein belongs to the adaptor complexes small subunit family. As to quaternary structure, adaptor protein complex 3 (AP-3) is a heterotetramer composed of 2 large adaptins (APL5 and APL6), a medium adaptin (APM3) and a small adaptin (APS3).

Its subcellular location is the golgi apparatus. The protein resides in the cytoplasmic vesicle membrane. Its function is as follows. Part of the AP-3 complex, an adaptor-related complex which is not clathrin-associated. The complex is associated with the Golgi region as well as more peripheral structures. It facilitates the budding of vesicles from the Golgi membrane and may be directly involved in trafficking to the vacuole. The chain is AP-3 complex subunit sigma (APS3) from Eremothecium gossypii (strain ATCC 10895 / CBS 109.51 / FGSC 9923 / NRRL Y-1056) (Yeast).